A 938-amino-acid polypeptide reads, in one-letter code: Isoleucine--tRNA ligase (938 aa).

The 'HIGH' region motif lies at proline 58–histidine 68. Glutamate 566 provides a ligand contact to L-isoleucyl-5'-AMP. A 'KMSKS' region motif is present at residues lysine 607–serine 611. Lysine 610 contributes to the ATP binding site. The Zn(2+) site is built by cysteine 906, cysteine 909, cysteine 926, and cysteine 929.

This sequence belongs to the class-I aminoacyl-tRNA synthetase family. IleS type 1 subfamily. In terms of assembly, monomer. Requires Zn(2+) as cofactor.

It localises to the cytoplasm. It carries out the reaction tRNA(Ile) + L-isoleucine + ATP = L-isoleucyl-tRNA(Ile) + AMP + diphosphate. In terms of biological role, catalyzes the attachment of isoleucine to tRNA(Ile). As IleRS can inadvertently accommodate and process structurally similar amino acids such as valine, to avoid such errors it has two additional distinct tRNA(Ile)-dependent editing activities. One activity is designated as 'pretransfer' editing and involves the hydrolysis of activated Val-AMP. The other activity is designated 'posttransfer' editing and involves deacylation of mischarged Val-tRNA(Ile). The chain is Isoleucine--tRNA ligase from Desulfovibrio desulfuricans (strain ATCC 27774 / DSM 6949 / MB).